A 418-amino-acid polypeptide reads, in one-letter code: Serine hydroxymethyltransferase (418 aa).

(6S)-5,6,7,8-tetrahydrofolate is bound by residues leucine 120 and 124-126 (GHL). At lysine 229 the chain carries N6-(pyridoxal phosphate)lysine. 353 to 355 (SPF) provides a ligand contact to (6S)-5,6,7,8-tetrahydrofolate.

The protein belongs to the SHMT family. Homodimer. Pyridoxal 5'-phosphate is required as a cofactor.

It is found in the cytoplasm. The enzyme catalyses (6R)-5,10-methylene-5,6,7,8-tetrahydrofolate + glycine + H2O = (6S)-5,6,7,8-tetrahydrofolate + L-serine. It participates in one-carbon metabolism; tetrahydrofolate interconversion. Its pathway is amino-acid biosynthesis; glycine biosynthesis; glycine from L-serine: step 1/1. Functionally, catalyzes the reversible interconversion of serine and glycine with tetrahydrofolate (THF) serving as the one-carbon carrier. This reaction serves as the major source of one-carbon groups required for the biosynthesis of purines, thymidylate, methionine, and other important biomolecules. Also exhibits THF-independent aldolase activity toward beta-hydroxyamino acids, producing glycine and aldehydes, via a retro-aldol mechanism. This is Serine hydroxymethyltransferase from Psychrobacter cryohalolentis (strain ATCC BAA-1226 / DSM 17306 / VKM B-2378 / K5).